Here is a 120-residue protein sequence, read N- to C-terminus: Large ribosomal subunit protein bL12 (120 aa).

Belongs to the bacterial ribosomal protein bL12 family. In terms of assembly, homodimer. Part of the ribosomal stalk of the 50S ribosomal subunit. Forms a multimeric L10(L12)X complex, where L10 forms an elongated spine to which 2 to 4 L12 dimers bind in a sequential fashion. Binds GTP-bound translation factors.

Its function is as follows. Forms part of the ribosomal stalk which helps the ribosome interact with GTP-bound translation factors. Is thus essential for accurate translation. In Lactobacillus helveticus (strain DPC 4571), this protein is Large ribosomal subunit protein bL12.